The primary structure comprises 1293 residues: Phosphoribosylformylglycinamidine synthase (1293 aa).

ATP-binding positions include 305 to 316 (GAATGSGGEIRD) and Ala-676. Residues Asp-677, Glu-716, Asn-720, and Asp-884 each coordinate Mg(2+). Ser-886 is an ATP binding site. Residues 1040 to 1293 (MAILREQGVN…MFRNARVKLG (254 aa)) enclose the Glutamine amidotransferase type-1 domain. The active-site Nucleophile is Cys-1133. Catalysis depends on residues His-1258 and Glu-1260.

This sequence in the N-terminal section; belongs to the FGAMS family. In terms of assembly, monomer.

The protein localises to the cytoplasm. It carries out the reaction N(2)-formyl-N(1)-(5-phospho-beta-D-ribosyl)glycinamide + L-glutamine + ATP + H2O = 2-formamido-N(1)-(5-O-phospho-beta-D-ribosyl)acetamidine + L-glutamate + ADP + phosphate + H(+). The protein operates within purine metabolism; IMP biosynthesis via de novo pathway; 5-amino-1-(5-phospho-D-ribosyl)imidazole from N(2)-formyl-N(1)-(5-phospho-D-ribosyl)glycinamide: step 1/2. Functionally, phosphoribosylformylglycinamidine synthase involved in the purines biosynthetic pathway. Catalyzes the ATP-dependent conversion of formylglycinamide ribonucleotide (FGAR) and glutamine to yield formylglycinamidine ribonucleotide (FGAM) and glutamate. The chain is Phosphoribosylformylglycinamidine synthase from Shewanella denitrificans (strain OS217 / ATCC BAA-1090 / DSM 15013).